A 723-amino-acid polypeptide reads, in one-letter code: Protein Hook homolog (723 aa).

The Calponin-homology (CH) domain maps to 4-120 (TELCECLVQW…RLLQLILGCA (117 aa)). Coiled coils occupy residues 162 to 423 (VLPE…MQLQ) and 457 to 665 (EIKE…IVSA). The interval 682–723 (LANGGPMQGGQSFLARQRQATSRRTTVSTTHPGHARSVNFVN) is disordered. Residues 696–711 (ARQRQATSRRTTVSTT) show a composition bias toward low complexity.

The protein belongs to the hook family. As to quaternary structure, interacts with microtubules.

The protein resides in the cytoplasm. The protein localises to the cytoskeleton. In terms of biological role, may function to promote vesicle trafficking and/or fusion. May act to link a number of membrane-bound organelles to the cytoskeleton. This Branchiostoma floridae (Florida lancelet) protein is Protein Hook homolog.